A 156-amino-acid chain; its full sequence is Small ribosomal subunit protein uS7 (156 aa).

This sequence belongs to the universal ribosomal protein uS7 family. Part of the 30S ribosomal subunit. Contacts proteins S9 and S11.

Its function is as follows. One of the primary rRNA binding proteins, it binds directly to 16S rRNA where it nucleates assembly of the head domain of the 30S subunit. Is located at the subunit interface close to the decoding center, probably blocks exit of the E-site tRNA. This chain is Small ribosomal subunit protein uS7, found in Lactobacillus helveticus (strain DPC 4571).